We begin with the raw amino-acid sequence, 99 residues long: Acylphosphatase (99 aa).

The region spanning 14–99 (AVDVTVTGRV…DQGLRSFGVR (86 aa)) is the Acylphosphatase-like domain. Active-site residues include Arg-29 and Asn-47.

The protein belongs to the acylphosphatase family.

The catalysed reaction is an acyl phosphate + H2O = a carboxylate + phosphate + H(+). The protein is Acylphosphatase (acyP) of Nocardioides sp. (strain ATCC BAA-499 / JS614).